The chain runs to 85 residues: Small ribosomal subunit protein uS17 (85 aa).

The protein belongs to the universal ribosomal protein uS17 family. As to quaternary structure, part of the 30S ribosomal subunit.

Its function is as follows. One of the primary rRNA binding proteins, it binds specifically to the 5'-end of 16S ribosomal RNA. The chain is Small ribosomal subunit protein uS17 from Mycoplasma genitalium (strain ATCC 33530 / DSM 19775 / NCTC 10195 / G37) (Mycoplasmoides genitalium).